The sequence spans 104 residues: Large ribosomal subunit protein eL42 (104 aa).

Positions 22-56 are disordered; it reads KVSQAKKSKDNPRAQGNRRYARKQRGYGGQTKPIL.

Belongs to the eukaryotic ribosomal protein eL42 family.

This Encephalitozoon cuniculi (strain GB-M1) (Microsporidian parasite) protein is Large ribosomal subunit protein eL42 (RPL44).